A 381-amino-acid chain; its full sequence is UDP-4-amino-4-deoxy-L-arabinose--oxoglutarate aminotransferase (381 aa).

Residue lysine 182 is modified to N6-(pyridoxal phosphate)lysine.

The protein belongs to the DegT/DnrJ/EryC1 family. ArnB subfamily. As to quaternary structure, homodimer. Pyridoxal 5'-phosphate serves as cofactor.

The enzyme catalyses UDP-4-amino-4-deoxy-beta-L-arabinose + 2-oxoglutarate = UDP-beta-L-threo-pentopyranos-4-ulose + L-glutamate. The protein operates within nucleotide-sugar biosynthesis; UDP-4-deoxy-4-formamido-beta-L-arabinose biosynthesis; UDP-4-deoxy-4-formamido-beta-L-arabinose from UDP-alpha-D-glucuronate: step 2/3. It functions in the pathway bacterial outer membrane biogenesis; lipopolysaccharide biosynthesis. Functionally, catalyzes the conversion of UDP-4-keto-arabinose (UDP-Ara4O) to UDP-4-amino-4-deoxy-L-arabinose (UDP-L-Ara4N). The modified arabinose is attached to lipid A and is required for resistance to polymyxin and cationic antimicrobial peptides. The protein is UDP-4-amino-4-deoxy-L-arabinose--oxoglutarate aminotransferase of Edwardsiella ictaluri (strain 93-146).